Reading from the N-terminus, the 23-residue chain is GLGSVLGKILKMGVNLLGGAPKQ.

As to expression, expressed by the skin glands.

Its subcellular location is the secreted. Functionally, antimicrobial peptide. This is Caerulein precursor fragment BM2 from Xenopus boumbaensis (Mawa clawed frog).